A 526-amino-acid chain; its full sequence is Cytochrome P450 4F5 (526 aa).

Residue Cys470 coordinates heme.

Belongs to the cytochrome P450 family. Heme is required as a cofactor. As to expression, high expression in liver and kidney. Lower expression in brain.

Its subcellular location is the endoplasmic reticulum membrane. The protein localises to the microsome membrane. The catalysed reaction is an organic molecule + reduced [NADPH--hemoprotein reductase] + O2 = an alcohol + oxidized [NADPH--hemoprotein reductase] + H2O + H(+). This chain is Cytochrome P450 4F5 (Cyp4f5), found in Rattus norvegicus (Rat).